Consider the following 97-residue polypeptide: MTRISSDDVRKVSKLARLEISEEHVETYANQLEEILEYIAQLEKIDTKNIPPTTRAVEVVNVLREDIVDKSNVRDKILDLAPNREGQFYRVPKILAE.

Belongs to the GatC family. Heterotrimer of A, B and C subunits.

The catalysed reaction is L-glutamyl-tRNA(Gln) + L-glutamine + ATP + H2O = L-glutaminyl-tRNA(Gln) + L-glutamate + ADP + phosphate + H(+). It catalyses the reaction L-aspartyl-tRNA(Asn) + L-glutamine + ATP + H2O = L-asparaginyl-tRNA(Asn) + L-glutamate + ADP + phosphate + 2 H(+). Functionally, allows the formation of correctly charged Asn-tRNA(Asn) or Gln-tRNA(Gln) through the transamidation of misacylated Asp-tRNA(Asn) or Glu-tRNA(Gln) in organisms which lack either or both of asparaginyl-tRNA or glutaminyl-tRNA synthetases. The reaction takes place in the presence of glutamine and ATP through an activated phospho-Asp-tRNA(Asn) or phospho-Glu-tRNA(Gln). This Prochlorococcus marinus (strain SARG / CCMP1375 / SS120) protein is Aspartyl/glutamyl-tRNA(Asn/Gln) amidotransferase subunit C.